Here is a 175-residue protein sequence, read N- to C-terminus: Ribosome maturation factor RimM (175 aa).

Residues 97–169 (EDKFYFHEII…TVRVITPEGL (73 aa)) form the PRC barrel domain.

Belongs to the RimM family. As to quaternary structure, binds ribosomal protein uS19.

The protein resides in the cytoplasm. Functionally, an accessory protein needed during the final step in the assembly of 30S ribosomal subunit, possibly for assembly of the head region. Essential for efficient processing of 16S rRNA. May be needed both before and after RbfA during the maturation of 16S rRNA. It has affinity for free ribosomal 30S subunits but not for 70S ribosomes. This is Ribosome maturation factor RimM from Christiangramia forsetii (strain DSM 17595 / CGMCC 1.15422 / KT0803) (Gramella forsetii).